The following is a 211-amino-acid chain: MALGLVGRKVGMTRIFTEDGVSIPVTVIEATPNRIAQIKSEATDGYNALQVTAGTKKASRVNKASAGHFAKAGVEAGRGLWEFRLNGGEGDFEVGAELTVELFNEINKVDVTGTSKGKGFQGGVKRWNFSMQDATHGNSLSHRAPGSIGQNQSPGKVFKGKKMAGHMGAERVTTQNLELVRVDAERNLLLVKGAVPGAIGGDVIVKPAVKA.

Positions 135–155 (THGNSLSHRAPGSIGQNQSPG) are disordered. Gln-152 is subject to N5-methylglutamine.

This sequence belongs to the universal ribosomal protein uL3 family. As to quaternary structure, part of the 50S ribosomal subunit. Forms a cluster with proteins L14 and L19. In terms of processing, methylated by PrmB.

Functionally, one of the primary rRNA binding proteins, it binds directly near the 3'-end of the 23S rRNA, where it nucleates assembly of the 50S subunit. The sequence is that of Large ribosomal subunit protein uL3 from Pseudoalteromonas translucida (strain TAC 125).